The sequence spans 1264 residues: Ubiquitin carboxyl-terminal hydrolase usp-48 (1264 aa).

Residues 108 to 430 (AGLINGGNFC…ACYGLLYRRR (323 aa)) form the USP domain. The active-site Nucleophile is C117. The active-site Proton acceptor is the H366. Disordered regions lie at residues 390–415 (IPKPPGTEKPTTAKTEKSRKKDKEKY), 522–610 (AKGE…IMDT), and 630–679 (TVEV…PVSS). Basic and acidic residues-rich tracts occupy residues 403-415 (KTEKSRKKDKEKY) and 532-543 (EASENEEKKKNE). Residues 516–547 (AQEYEVAKGEKKKKKKEASENEEKKKNEEDEA) are a coiled coil. Low complexity predominate over residues 565 to 575 (SEPSTSAAATE). Composition is skewed to polar residues over residues 587–599 (ETPNPENAESTQV) and 663–678 (NGTNGTNSSPQKQPVS).

This sequence belongs to the peptidase C19 family. As to expression, broadly expressed. Expressed in germline.

It localises to the nucleus. Its subcellular location is the chromosome. It catalyses the reaction Thiol-dependent hydrolysis of ester, thioester, amide, peptide and isopeptide bonds formed by the C-terminal Gly of ubiquitin (a 76-residue protein attached to proteins as an intracellular targeting signal).. Recognizes and hydrolyzes the peptide bond at the C-terminal Gly of ubiquitin. Involved in the processing of poly-ubiquitin precursors as well as that of ubiquitinated proteins. Required post-developmentally to restrict the plasticity of epidermal cells, probably by regulating gene expression. This Caenorhabditis elegans protein is Ubiquitin carboxyl-terminal hydrolase usp-48.